The following is a 440-amino-acid chain: Ribosomal protein uS12 methylthiotransferase RimO (440 aa).

The MTTase N-terminal domain occupies 8–124; it reads TSVFLLSLGC…VLDALGARYH (117 aa). Cysteine 17, cysteine 53, cysteine 87, cysteine 148, cysteine 152, and cysteine 155 together coordinate [4Fe-4S] cluster. A Radical SAM core domain is found at 134-363; that stretch reads LTPPHSSYLK…MELQEEIARK (230 aa). Residues 366-437 enclose the TRAM domain; sequence EAFVGSLMTV…AYELHGTVES (72 aa).

This sequence belongs to the methylthiotransferase family. RimO subfamily. [4Fe-4S] cluster serves as cofactor.

It localises to the cytoplasm. The catalysed reaction is L-aspartate(89)-[ribosomal protein uS12]-hydrogen + (sulfur carrier)-SH + AH2 + 2 S-adenosyl-L-methionine = 3-methylsulfanyl-L-aspartate(89)-[ribosomal protein uS12]-hydrogen + (sulfur carrier)-H + 5'-deoxyadenosine + L-methionine + A + S-adenosyl-L-homocysteine + 2 H(+). Catalyzes the methylthiolation of an aspartic acid residue of ribosomal protein uS12. This chain is Ribosomal protein uS12 methylthiotransferase RimO, found in Chlorobium luteolum (strain DSM 273 / BCRC 81028 / 2530) (Pelodictyon luteolum).